The following is a 500-amino-acid chain: Lysine--tRNA ligase (500 aa).

Glu410 and Glu417 together coordinate Mg(2+).

The protein belongs to the class-II aminoacyl-tRNA synthetase family. Homodimer. It depends on Mg(2+) as a cofactor.

It is found in the cytoplasm. The enzyme catalyses tRNA(Lys) + L-lysine + ATP = L-lysyl-tRNA(Lys) + AMP + diphosphate. The sequence is that of Lysine--tRNA ligase from Shewanella piezotolerans (strain WP3 / JCM 13877).